Here is a 268-residue protein sequence, read N- to C-terminus: Ribosomal RNA small subunit methyltransferase A (268 aa).

Positions 12, 14, 38, 59, 82, and 107 each coordinate S-adenosyl-L-methionine.

It belongs to the class I-like SAM-binding methyltransferase superfamily. rRNA adenine N(6)-methyltransferase family. RsmA subfamily.

The protein resides in the cytoplasm. It catalyses the reaction adenosine(1518)/adenosine(1519) in 16S rRNA + 4 S-adenosyl-L-methionine = N(6)-dimethyladenosine(1518)/N(6)-dimethyladenosine(1519) in 16S rRNA + 4 S-adenosyl-L-homocysteine + 4 H(+). Functionally, specifically dimethylates two adjacent adenosines (A1518 and A1519) in the loop of a conserved hairpin near the 3'-end of 16S rRNA in the 30S particle. May play a critical role in biogenesis of 30S subunits. This Aster yellows witches'-broom phytoplasma (strain AYWB) protein is Ribosomal RNA small subunit methyltransferase A.